The chain runs to 377 residues: Glutamate 5-kinase (377 aa).

Lys-18 contacts ATP. Ser-55, Asp-142, and Asn-154 together coordinate substrate. ATP-binding positions include 174-175 (SD) and 216-222 (TGGMKSK). Positions 281 to 359 (QGEVVVDAGA…REIEALLGYK (79 aa)) constitute a PUA domain.

Belongs to the glutamate 5-kinase family.

It is found in the cytoplasm. It carries out the reaction L-glutamate + ATP = L-glutamyl 5-phosphate + ADP. Its pathway is amino-acid biosynthesis; L-proline biosynthesis; L-glutamate 5-semialdehyde from L-glutamate: step 1/2. Its function is as follows. Catalyzes the transfer of a phosphate group to glutamate to form L-glutamate 5-phosphate. This Meiothermus ruber protein is Glutamate 5-kinase.